Here is a 496-residue protein sequence, read N- to C-terminus: Fusarielin biosynthesis cluster transcription factor FSL7 (496 aa).

Residues 16 to 46 constitute a DNA-binding region (zn(2)-C6 fungal-type); it reads CDRCHELKIRCTRTGGTESRCDRCEKNDIDC. 5 disordered regions span residues 57-102, 189-224, 281-307, 348-379, and 444-470; these read PKSQ…SINS, RSINHRSGSENESMEGNAELQSTQSASGSPQEEDQM, ANHTSSSSSSNSTTVDGPSEIRNQSRS, GSTSSSTYNDTTAHPSSASLPSQTGGPTKPRT, and MTREQHVSTGHGPDRHTSPVLSSAQAA. Composition is skewed to polar residues over residues 65 to 89 and 207 to 218; these read GPNTTARQNDTTTRGRIQQEQQEQM and ELQSTQSASGSP. The span at 281–294 shows a compositional bias: low complexity; that stretch reads ANHTSSSSSSNSTT. Residues 355 to 379 are compositionally biased toward polar residues; sequence YNDTTAHPSSASLPSQTGGPTKPRT. The span at 444 to 460 shows a compositional bias: basic and acidic residues; that stretch reads MTREQHVSTGHGPDRHT.

The protein localises to the nucleus. Its function is as follows. Transcription regulator that specifically up-regulates the gene cluster that mediates the biosynthesis of fusarielins F, G and H, decaketide compounds with 5 methylations and a decaline core that act as mycoestrogens as they stimulate growth of MCF-7 breast cancer cells. Probably binds the 5'-CGGNNNCCG-3' motif present in the promoter of all the cluster genes. This chain is Fusarielin biosynthesis cluster transcription factor FSL7, found in Gibberella zeae (strain ATCC MYA-4620 / CBS 123657 / FGSC 9075 / NRRL 31084 / PH-1) (Wheat head blight fungus).